Here is a 170-residue protein sequence, read N- to C-terminus: Adenine phosphoribosyltransferase (170 aa).

This sequence belongs to the purine/pyrimidine phosphoribosyltransferase family. Homodimer.

Its subcellular location is the cytoplasm. It carries out the reaction AMP + diphosphate = 5-phospho-alpha-D-ribose 1-diphosphate + adenine. It participates in purine metabolism; AMP biosynthesis via salvage pathway; AMP from adenine: step 1/1. Catalyzes a salvage reaction resulting in the formation of AMP, that is energically less costly than de novo synthesis. This is Adenine phosphoribosyltransferase from Bacillus anthracis (strain A0248).